The following is a 358-amino-acid chain: Methionine import ATP-binding protein MetN (358 aa).

The ABC transporter domain occupies 2–247; the sequence is ITTTGLTKVY…PGSELAHELF (246 aa). 38-45 contributes to the ATP binding site; sequence GQSGAGKS.

Belongs to the ABC transporter superfamily. Methionine importer (TC 3.A.1.24) family. As to quaternary structure, the complex is composed of two ATP-binding proteins (MetN), two transmembrane proteins (MetI) and a solute-binding protein (MetQ).

It is found in the cell membrane. The catalysed reaction is L-methionine(out) + ATP + H2O = L-methionine(in) + ADP + phosphate + H(+). The enzyme catalyses D-methionine(out) + ATP + H2O = D-methionine(in) + ADP + phosphate + H(+). Its function is as follows. Part of the ABC transporter complex MetNIQ involved in methionine import. Responsible for energy coupling to the transport system. The protein is Methionine import ATP-binding protein MetN of Streptomyces griseus.